Here is a 465-residue protein sequence, read N- to C-terminus: Cystathionine beta-lyase (465 aa).

The residue at position 213 (Lys213) is an N6-(pyridoxal phosphate)lysine.

This sequence belongs to the trans-sulfuration enzymes family. The cofactor is pyridoxal 5'-phosphate.

Its subcellular location is the cytoplasm. The protein resides in the nucleus. It carries out the reaction L,L-cystathionine + H2O = L-homocysteine + pyruvate + NH4(+). The catalysed reaction is an S-substituted L-cysteine + H2O = a thiol + pyruvate + NH4(+). Its pathway is amino-acid biosynthesis; L-methionine biosynthesis via de novo pathway; L-homocysteine from L-cystathionine: step 1/1. The polypeptide is Cystathionine beta-lyase (STR3) (Saccharomyces cerevisiae (strain ATCC 204508 / S288c) (Baker's yeast)).